The sequence spans 978 residues: LRR receptor-like serine/threonine-protein kinase ER1 (978 aa).

The first 24 residues, 1–24 (MTPAPAAASYRALVALLLVAVAVA), serve as a signal peptide directing secretion. The Extracellular segment spans residues 25-577 (DDGSTLLEIK…GHQQKPLISK (553 aa)). 2 N-linked (GlcNAc...) asparagine glycosylation sites follow: Asn62 and Asn71. LRR repeat units follow at residues 66–87 (AVAA…AVGR), 88–112 (LKGI…IGDC), 114–136 (SLKT…VSKL), 137–159 (KHIE…TLSQ), 160–184 (LPNL…IYWN), 186–208 (VLQY…ICQL), 209–232 (TGLW…IGNC), 233–257 (TSFQ…GFLQ), 259–278 (ATLS…VIGL), 279–302 (MQAL…ILGN), 304–327 (TYTE…LGNM), 328–350 (STLH…EFGK), 352–375 (TGLF…ISSC), 377–399 (NLNS…LHKL), 400–423 (ESMT…LSRI), 424–447 (NNLD…IGSL), 449–470 (HLLR…EIGN), 471–494 (LRSI…ELGM), 496–518 (QNLM…LMNC), and 519–543 (FSLN…NFSR). Asn218 and Asn231 each carry an N-linked (GlcNAc...) asparagine glycan. N-linked (GlcNAc...) asparagine glycans are attached at residues Asn302 and Asn326. N-linked (GlcNAc...) asparagine glycosylation is found at Asn371, Asn389, and Asn406. Residue Asn454 is glycosylated (N-linked (GlcNAc...) asparagine). Asn507, Asn525, and Asn540 each carry an N-linked (GlcNAc...) asparagine glycan. A helical transmembrane segment spans residues 578 to 598 (AAILGIAVGGLVILLMILVAV). Topologically, residues 599–978 (CRPHSPPVFK…FGEVISQNTE (380 aa)) are cytoplasmic. The Protein kinase domain maps to 645–916 (LSEKYIIGYG…EVVRVLDCLV (272 aa)). ATP-binding positions include 651-659 (IGYGASSTV) and Lys673. Catalysis depends on Asp771, which acts as the Proton acceptor.

Belongs to the protein kinase superfamily. Ser/Thr protein kinase family.

Its subcellular location is the cell membrane. It catalyses the reaction L-seryl-[protein] + ATP = O-phospho-L-seryl-[protein] + ADP + H(+). The catalysed reaction is L-threonyl-[protein] + ATP = O-phospho-L-threonyl-[protein] + ADP + H(+). Functionally, receptor kinase involved in the regulation of thermotolerance. Functions as a positive regulator of heat tolerance. May be involved in the regulation of cell proliferation and cell growth. This chain is LRR receptor-like serine/threonine-protein kinase ER1, found in Oryza sativa subsp. japonica (Rice).